The chain runs to 500 residues: Archaeal-type glutamate synthase [NADPH] (500 aa).

4Fe-4S ferredoxin-type domains follow at residues S7 to D38 and D40 to N69. 8 residues coordinate [4Fe-4S] cluster: C18, C21, C24, C28, C49, C52, C55, and C59.

This sequence belongs to the glutamate synthase family. FMN serves as cofactor.

The catalysed reaction is 2 L-glutamate + NADP(+) = L-glutamine + 2-oxoglutarate + NADPH + H(+). In Dehalococcoides mccartyi (strain ATCC BAA-2266 / KCTC 15142 / 195) (Dehalococcoides ethenogenes (strain 195)), this protein is Archaeal-type glutamate synthase [NADPH].